Reading from the N-terminus, the 326-residue chain is N-acetyl-gamma-glutamyl-phosphate reductase (326 aa).

Cys-155 is a catalytic residue.

The protein belongs to the NAGSA dehydrogenase family. Type 1 subfamily.

Its subcellular location is the cytoplasm. The enzyme catalyses N-acetyl-L-glutamate 5-semialdehyde + phosphate + NADP(+) = N-acetyl-L-glutamyl 5-phosphate + NADPH + H(+). It functions in the pathway amino-acid biosynthesis; L-arginine biosynthesis; N(2)-acetyl-L-ornithine from L-glutamate: step 3/4. Catalyzes the NADPH-dependent reduction of N-acetyl-5-glutamyl phosphate to yield N-acetyl-L-glutamate 5-semialdehyde. In Shewanella denitrificans (strain OS217 / ATCC BAA-1090 / DSM 15013), this protein is N-acetyl-gamma-glutamyl-phosphate reductase.